Consider the following 207-residue polypeptide: HTH-type transcriptional regulator AqdR (207 aa).

The HTH tetR-type domain occupies 16-76 (ARFRERVLDA…DALLTRTQAE (61 aa)). A DNA-binding region (H-T-H motif) is located at residues 39–58 (GFADVARKAGVNGVSLYRRW).

May regulate the expression of genes involved in the degradation of the Pseudomonas aeruginosa quorum sensing signal molecules HHQ (2-heptyl-4-quinolone) and PQS (2-heptyl-3-hydroxy-4-quinolone). The sequence is that of HTH-type transcriptional regulator AqdR from Rhodococcus erythropolis (Arthrobacter picolinophilus).